We begin with the raw amino-acid sequence, 695 residues long: UvrABC system protein B (695 aa).

The region spanning 45 to 434 (EGIEDGLSFQ…QVVEQVVRPT (390 aa)) is the Helicase ATP-binding domain. 58 to 65 (GVTGSGKT) is a binding site for ATP. A Beta-hairpin motif is present at residues 111–134 (YYDYYQPEAYVPQRDLFIEKDSSI). In terms of domain architecture, Helicase C-terminal spans 449 to 602 (QVDDLLSEIN…QMAFNEANGI (154 aa)). In terms of domain architecture, UVR spans 646-681 (SKEIKRLEKLMMDHAKNLEFEKAAQVRDQLAKLKAQ).

This sequence belongs to the UvrB family. In terms of assembly, forms a heterotetramer with UvrA during the search for lesions. Interacts with UvrC in an incision complex.

Its subcellular location is the cytoplasm. The UvrABC repair system catalyzes the recognition and processing of DNA lesions. A damage recognition complex composed of 2 UvrA and 2 UvrB subunits scans DNA for abnormalities. Upon binding of the UvrA(2)B(2) complex to a putative damaged site, the DNA wraps around one UvrB monomer. DNA wrap is dependent on ATP binding by UvrB and probably causes local melting of the DNA helix, facilitating insertion of UvrB beta-hairpin between the DNA strands. Then UvrB probes one DNA strand for the presence of a lesion. If a lesion is found the UvrA subunits dissociate and the UvrB-DNA preincision complex is formed. This complex is subsequently bound by UvrC and the second UvrB is released. If no lesion is found, the DNA wraps around the other UvrB subunit that will check the other stand for damage. The chain is UvrABC system protein B from Cupriavidus pinatubonensis (strain JMP 134 / LMG 1197) (Cupriavidus necator (strain JMP 134)).